The sequence spans 367 residues: NADH-quinone oxidoreductase subunit H (367 aa).

The next 8 helical transmembrane spans lie at 19–39 (ALFIKIIAVIISVMISVAYLV), 87–107 (ICFLIAPIITFTLALLGWAVI), 132–152 (IGVLYILAISSLGVYGIIIAG), 178–198 (IGLTIVTVLLATGSLKLGEIV), 204–224 (MPYWIDLLLLPMACIFFISAL), 266–286 (ILINAMAVIFFFGGWYPPLNI), 291–311 (IIPGIVWFVLKVVALLFCFIW), and 328–348 (GWKVFLPISLLWVVLVSSILV).

It belongs to the complex I subunit 1 family. NDH-1 is composed of 14 different subunits. Subunits NuoA, H, J, K, L, M, N constitute the membrane sector of the complex.

The protein resides in the cell inner membrane. It catalyses the reaction a quinone + NADH + 5 H(+)(in) = a quinol + NAD(+) + 4 H(+)(out). NDH-1 shuttles electrons from NADH, via FMN and iron-sulfur (Fe-S) centers, to quinones in the respiratory chain. The immediate electron acceptor for the enzyme in this species is believed to be ubiquinone. Couples the redox reaction to proton translocation (for every two electrons transferred, four hydrogen ions are translocated across the cytoplasmic membrane), and thus conserves the redox energy in a proton gradient. This subunit may bind ubiquinone. The polypeptide is NADH-quinone oxidoreductase subunit H (Ehrlichia chaffeensis (strain ATCC CRL-10679 / Arkansas)).